A 268-amino-acid polypeptide reads, in one-letter code: Deoxyuridine 5'-triphosphate nucleotidohydrolase (268 aa).

Substrate is bound by residues 172–174 (RSS) and 263–264 (FG).

Belongs to the dUTPase family. Requires Mg(2+) as cofactor.

It catalyses the reaction dUTP + H2O = dUMP + diphosphate + H(+). Functionally, involved in nucleotide metabolism: produces dUMP, the immediate precursor of thymidine nucleotides and decreases the intracellular concentration of dUTP to avoid uracil incorporation into viral DNA. The chain is Deoxyuridine 5'-triphosphate nucleotidohydrolase from Suid herpesvirus 1 (strain Kaplan) (SuHV-1).